Reading from the N-terminus, the 298-residue chain is Protoheme IX farnesyltransferase (298 aa).

Helical transmembrane passes span 23–43, 47–67, 93–113, 115–135, 143–163, 169–189, 211–231, 236–256, and 278–298; these read LLLL…GKPY, LVVL…NMYF, VFIA…RIIN, HFAL…TYLL, IIAG…AAAG, ALLF…FLAT, IAVA…IVGL, VIGT…FHLA, and MMLG…YIIS.

The protein belongs to the UbiA prenyltransferase family. Protoheme IX farnesyltransferase subfamily.

It is found in the cell membrane. The enzyme catalyses heme b + (2E,6E)-farnesyl diphosphate + H2O = Fe(II)-heme o + diphosphate. It participates in porphyrin-containing compound metabolism; heme O biosynthesis; heme O from protoheme: step 1/1. Its function is as follows. Converts heme B (protoheme IX) to heme O by substitution of the vinyl group on carbon 2 of heme B porphyrin ring with a hydroxyethyl farnesyl side group. In Hyperthermus butylicus (strain DSM 5456 / JCM 9403 / PLM1-5), this protein is Protoheme IX farnesyltransferase.